The chain runs to 285 residues: NAD kinase (285 aa).

Residue aspartate 76 is the Proton acceptor of the active site. Residues 76-77 (DG), 151-152 (NE), histidine 162, arginine 179, aspartate 181, 192-197 (TAYSLS), and glutamine 252 each bind NAD(+).

This sequence belongs to the NAD kinase family. A divalent metal cation serves as cofactor.

It localises to the cytoplasm. The enzyme catalyses NAD(+) + ATP = ADP + NADP(+) + H(+). In terms of biological role, involved in the regulation of the intracellular balance of NAD and NADP, and is a key enzyme in the biosynthesis of NADP. Catalyzes specifically the phosphorylation on 2'-hydroxyl of the adenosine moiety of NAD to yield NADP. The polypeptide is NAD kinase (Haemophilus influenzae (strain ATCC 51907 / DSM 11121 / KW20 / Rd)).